A 435-amino-acid chain; its full sequence is Palmitoyltransferase pfa4 (435 aa).

The Cytoplasmic segment spans residues 1 to 10 (MLCSSFSVSR). Residues 11-31 (LAIPAVCILIAFLAYTSQIFF) traverse the membrane as a helical segment. The Lumenal segment spans residues 32–48 (LYFEDAPLKEDEVWRIN). The helical transmembrane segment at 49 to 69 (ILAICIWICYYRACTVDPGHV) threads the bilayer. Residues 70 to 129 (PKGWMPSDRERLKADRASGRQRWCRRCEAYKPPRAHHCKTCERCVPKMDHHCPWTSNCVS) lie on the Cytoplasmic side of the membrane. The 51-residue stretch at 91–141 (RWCRRCEAYKPPRAHHCKTCERCVPKMDHHCPWTSNCVSHFTFPHFARFLF) folds into the DHHC domain. Cys121 (S-palmitoyl cysteine intermediate) is an active-site residue. A helical transmembrane segment spans residues 130 to 150 (HFTFPHFARFLFYAVVGIAYL). At 151-179 (ETRLWQRVSKVWGSRHLPSYLGPSMGQIG) the chain is on the lumenal side. A helical membrane pass occupies residues 180–200 (HLFVLFVTNSLTLFALSLLLL). At 201–435 (RTLWSLGSNT…QRAKRQHLSQ (235 aa)) the chain is on the cytoplasmic side. Basic and acidic residues predominate over residues 359–368 (RKPFHVRLEE). Residues 359–408 (RKPFHVRLEEYSNGSSDAEADTGSDDDSDHGEEGWKNSEGERLRDFGVDE) are disordered. The segment covering 376 to 388 (AEADTGSDDDSDH) has biased composition (acidic residues). The span at 389-405 (GEEGWKNSEGERLRDFG) shows a compositional bias: basic and acidic residues.

The protein belongs to the DHHC palmitoyltransferase family. PFA4 subfamily.

It is found in the endoplasmic reticulum membrane. It catalyses the reaction L-cysteinyl-[protein] + hexadecanoyl-CoA = S-hexadecanoyl-L-cysteinyl-[protein] + CoA. In terms of biological role, mediates the reversible addition of palmitate to target proteins, thereby regulating their membrane association and biological function. In Emericella nidulans (strain FGSC A4 / ATCC 38163 / CBS 112.46 / NRRL 194 / M139) (Aspergillus nidulans), this protein is Palmitoyltransferase pfa4.